The sequence spans 330 residues: MSTASAFAINAPSFVNASSLKKSSTSSARSGVLSARFTCNSSSSSSSATPPSLIRNEPVFAAPAPIITPNWTEDGNESYEEAIDALKKMLIEKGELEPVAAARIDQITAQAAAPDTKAPFDPVERIKSGFVKFKTEKFVTNPALYDELAKGQSPKFMVFACSDSRVCPSHVLDFQPGEAFVVRNVANMVPPFDKTKYSGVGAAVEYAVLHLKVQEIFVIGHSRCGGIKGLMTFPDEGPHSTDFIEDWVKVCLPAKSKVVAEHNGTHLDDQCVQCEKEAVNVSLGNLLTYPFVRDGLRNNTLALKGGHYDFVNGTFELWALDFGLSSPTSV.

Positions methionine 1–alanine 109 are chloroplast transit peptide-like.

It belongs to the beta-class carbonic anhydrase family. In terms of assembly, homohexamer.

It localises to the cytoplasm. It catalyses the reaction hydrogencarbonate + H(+) = CO2 + H2O. Functionally, reversible hydration of carbon dioxide. This chain is Carbonic anhydrase 1, found in Flaveria linearis (Narrowleaf yellowtops).